The chain runs to 165 residues: Methylated-DNA--protein-cysteine methyltransferase (165 aa).

C126 functions as the Nucleophile; methyl group acceptor in the catalytic mechanism.

This sequence belongs to the MGMT family.

It localises to the cytoplasm. The catalysed reaction is a 6-O-methyl-2'-deoxyguanosine in DNA + L-cysteinyl-[protein] = S-methyl-L-cysteinyl-[protein] + a 2'-deoxyguanosine in DNA. It carries out the reaction a 4-O-methyl-thymidine in DNA + L-cysteinyl-[protein] = a thymidine in DNA + S-methyl-L-cysteinyl-[protein]. Functionally, involved in the cellular defense against the biological effects of O6-methylguanine (O6-MeG) and O4-methylthymine (O4-MeT) in DNA. Repairs the methylated nucleobase in DNA by stoichiometrically transferring the methyl group to a cysteine residue in the enzyme. This is a suicide reaction: the enzyme is irreversibly inactivated. In Mycolicibacterium paratuberculosis (strain ATCC BAA-968 / K-10) (Mycobacterium paratuberculosis), this protein is Methylated-DNA--protein-cysteine methyltransferase.